Consider the following 158-residue polypeptide: 2-C-methyl-D-erythritol 2,4-cyclodiphosphate synthase (158 aa).

2 residues coordinate a divalent metal cation: D8 and H10. Residues 8–10 and 34–35 contribute to the 4-CDP-2-C-methyl-D-erythritol 2-phosphate site; these read DVH and HS. Residue H42 participates in a divalent metal cation binding. Residues 56-58, 61-65, 100-106, 132-135, F139, and R142 contribute to the 4-CDP-2-C-methyl-D-erythritol 2-phosphate site; these read DIG, FPDTD, AQRPKMA, and TTEE.

This sequence belongs to the IspF family. In terms of assembly, homotrimer. A divalent metal cation is required as a cofactor.

The enzyme catalyses 4-CDP-2-C-methyl-D-erythritol 2-phosphate = 2-C-methyl-D-erythritol 2,4-cyclic diphosphate + CMP. It participates in isoprenoid biosynthesis; isopentenyl diphosphate biosynthesis via DXP pathway; isopentenyl diphosphate from 1-deoxy-D-xylulose 5-phosphate: step 4/6. In terms of biological role, involved in the biosynthesis of isopentenyl diphosphate (IPP) and dimethylallyl diphosphate (DMAPP), two major building blocks of isoprenoid compounds. Catalyzes the conversion of 4-diphosphocytidyl-2-C-methyl-D-erythritol 2-phosphate (CDP-ME2P) to 2-C-methyl-D-erythritol 2,4-cyclodiphosphate (ME-CPP) with a corresponding release of cytidine 5-monophosphate (CMP). This is 2-C-methyl-D-erythritol 2,4-cyclodiphosphate synthase from Pelobacter propionicus (strain DSM 2379 / NBRC 103807 / OttBd1).